Reading from the N-terminus, the 585-residue chain is MGSIEEEARPLIEEGLILQEVKLYAEDGSVDFNGNPPLKEKTGNWKACPFILGNECCERLAYYGIAGNLITYLTTKLHQGNVSAATNVTTWQGTCYLTPLIGAVLADAYWGRYWTIACFSGIYFIGMSALTLSASVPALKPAECIGDFCPSATPAQYAMFFGGLYLIALGTGGIKPCVSSFGADQFDDTDSRERVRKASFFNWFYFSINIGALVSSSLLVWIQENRGWGLGFGIPTVFMGLAIASFFFGTPLYRFQKPGGSPITRISQVVVASFRKSSVKVPEDATLLYETQDKNSAIAGSRKIEHTDDCQYLDKAAVISEEESKSGDYSNSWRLCTVTQVEELKILIRMFPIWASGIIFSAVYAQMSTMFVQQGRAMNCKIGSFQLPPAALGTFDTASVIIWVPLYDRFIVPLARKFTGVDKGFTEIQRMGIGLFVSVLCMAAAAIVEIIRLHMANDLGLVESGAPVPISVLWQIPQYFILGAAEVFYFIGQLEFFYDQSPDAMRSLCSALALLTNALGNYLSSLILTLVTYFTTRNGQEGWISDNLNSGHLDYFFWLLAGLSLVNMAVYFFSAARYKQKKASS.

Glycine 2 carries the post-translational modification N-acetylglycine. A helical transmembrane segment spans residues 91-111 (WQGTCYLTPLIGAVLADAYWG). Residue threonine 115 is modified to Phosphothreonine. Transmembrane regions (helical) follow at residues 116–136 (IACF…SASV), 154–174 (PAQY…TGGI), 200–220 (FFNW…SLLV), 228–248 (WGLG…SFFF), 351–371 (FPIW…STMF), 387–407 (LPPA…VPLY), 431–451 (MGIG…VEII), 472–492 (VLWQ…YFIG), 511–531 (ALAL…LTLV), and 556–576 (FFWL…FSAA).

It belongs to the major facilitator superfamily. Proton-dependent oligopeptide transporter (POT/PTR) (TC 2.A.17) family. Highly expressed in young leaves, roots and germinating seeds, intermediately in stems, flowers and mature leaves and at low level in siliques.

The protein localises to the vacuole membrane. Inhibited by leucyl-ethionine. In terms of biological role, peptide transporter. Mediates the transport of di- and tripeptides. High affinity, low capacity transporter. Can also transport histidine. The polypeptide is Protein NRT1/ PTR FAMILY 8.3 (NPF8.3) (Arabidopsis thaliana (Mouse-ear cress)).